The chain runs to 460 residues: 3-isopropylmalate dehydratase large subunit (460 aa).

Residues C338, C398, and C401 each coordinate [4Fe-4S] cluster.

It belongs to the aconitase/IPM isomerase family. LeuC type 1 subfamily. In terms of assembly, heterodimer of LeuC and LeuD. [4Fe-4S] cluster is required as a cofactor.

The catalysed reaction is (2R,3S)-3-isopropylmalate = (2S)-2-isopropylmalate. Its pathway is amino-acid biosynthesis; L-leucine biosynthesis; L-leucine from 3-methyl-2-oxobutanoate: step 2/4. In terms of biological role, catalyzes the isomerization between 2-isopropylmalate and 3-isopropylmalate, via the formation of 2-isopropylmaleate. This Streptococcus thermophilus (strain ATCC BAA-250 / LMG 18311) protein is 3-isopropylmalate dehydratase large subunit.